Consider the following 251-residue polypeptide: Low molecular mass lipoprotein PBMHPC-21 (251 aa).

The N-terminal stretch at 1 to 16 is a signal peptide; that stretch reads MKFVVVFASCVLAVSA.

Belongs to the 30 kDa lipoprotein family.

It is found in the secreted. This is Low molecular mass lipoprotein PBMHPC-21 from Bombyx mori (Silk moth).